We begin with the raw amino-acid sequence, 80 residues long: Clavaspirin (80 aa).

Positions 1–17 (MKTIILILLILGLGIDA) are cleaved as a signal peptide. Residues 18 to 29 (KSLEESKADEEK) constitute a propeptide that is removed on maturation. Leucine amide is present on L52. Positions 53–80 (GDDQQDNGKFYGYYAEDNGKHWYDTGDQ) are excised as a propeptide.

In terms of tissue distribution, pharyngeal tissues and hemocytes.

The protein resides in the secreted. Its function is as follows. Exhibits broad-spectrum antimicrobial activity against both Gram-positive and Gram-negative bacteria. Has potent hemolytic activity. In Styela clava (Sea squirt), this protein is Clavaspirin.